Reading from the N-terminus, the 212-residue chain is Imidazole glycerol phosphate synthase subunit HisH (212 aa).

Residues 1–211 enclose the Glutamine amidotransferase type-1 domain; it reads MIGVIDYGMG…KQFTQEQKVK (211 aa). The Nucleophile role is filled by Cys79. Residues His186 and Glu188 contribute to the active site.

In terms of assembly, heterodimer of HisH and HisF.

Its subcellular location is the cytoplasm. The enzyme catalyses 5-[(5-phospho-1-deoxy-D-ribulos-1-ylimino)methylamino]-1-(5-phospho-beta-D-ribosyl)imidazole-4-carboxamide + L-glutamine = D-erythro-1-(imidazol-4-yl)glycerol 3-phosphate + 5-amino-1-(5-phospho-beta-D-ribosyl)imidazole-4-carboxamide + L-glutamate + H(+). The catalysed reaction is L-glutamine + H2O = L-glutamate + NH4(+). It participates in amino-acid biosynthesis; L-histidine biosynthesis; L-histidine from 5-phospho-alpha-D-ribose 1-diphosphate: step 5/9. Its function is as follows. IGPS catalyzes the conversion of PRFAR and glutamine to IGP, AICAR and glutamate. The HisH subunit catalyzes the hydrolysis of glutamine to glutamate and ammonia as part of the synthesis of IGP and AICAR. The resulting ammonia molecule is channeled to the active site of HisF. This Bacillus licheniformis (strain ATCC 14580 / DSM 13 / JCM 2505 / CCUG 7422 / NBRC 12200 / NCIMB 9375 / NCTC 10341 / NRRL NRS-1264 / Gibson 46) protein is Imidazole glycerol phosphate synthase subunit HisH.